Here is a 456-residue protein sequence, read N- to C-terminus: Cysteine--tRNA ligase (456 aa).

Zn(2+) is bound at residue Cys28. Positions 30-40 (ITVYDHCHLGH) match the 'HIGH' region motif. Zn(2+) is bound by residues Cys209, His234, and Glu238. Residues 266–270 (KMAKS) carry the 'KMSKS' region motif. An ATP-binding site is contributed by Lys269.

It belongs to the class-I aminoacyl-tRNA synthetase family. Monomer. Zn(2+) serves as cofactor.

Its subcellular location is the cytoplasm. The enzyme catalyses tRNA(Cys) + L-cysteine + ATP = L-cysteinyl-tRNA(Cys) + AMP + diphosphate. The chain is Cysteine--tRNA ligase from Legionella pneumophila (strain Paris).